The sequence spans 346 residues: tRNA N6-adenosine threonylcarbamoyltransferase (346 aa).

A divalent metal cation is bound by residues H120, H124, and Y141. Residues 141 to 145 (YVSGG), D173, G188, E192, and N277 each bind substrate. D305 serves as a coordination point for a divalent metal cation.

It belongs to the KAE1 / TsaD family. In terms of assembly, component of the EKC/KEOPS complex composed of at least BUD32, CGI121, GON7, KAE1 and PCC1; the whole complex dimerizes. Requires a divalent metal cation as cofactor.

The protein resides in the cytoplasm. It localises to the nucleus. The catalysed reaction is L-threonylcarbamoyladenylate + adenosine(37) in tRNA = N(6)-L-threonylcarbamoyladenosine(37) in tRNA + AMP + H(+). In terms of biological role, component of the EKC/KEOPS complex that is required for the formation of a threonylcarbamoyl group on adenosine at position 37 (t(6)A37) in tRNAs that read codons beginning with adenine. The complex is probably involved in the transfer of the threonylcarbamoyl moiety of threonylcarbamoyl-AMP (TC-AMP) to the N6 group of A37. KAE1 likely plays a direct catalytic role in this reaction, but requires other protein(s) of the complex to fulfill this activity. The EKC/KEOPS complex also promotes both telomere uncapping and telomere elongation. The complex is required for efficient recruitment of transcriptional coactivators. The protein is tRNA N6-adenosine threonylcarbamoyltransferase of Gibberella zeae (strain ATCC MYA-4620 / CBS 123657 / FGSC 9075 / NRRL 31084 / PH-1) (Wheat head blight fungus).